A 327-amino-acid chain; its full sequence is Succinylglutamate desuccinylase (327 aa).

Residues histidine 53, glutamate 56, and histidine 146 each coordinate Zn(2+). Residue glutamate 209 is part of the active site.

It belongs to the AspA/AstE family. Succinylglutamate desuccinylase subfamily. The cofactor is Zn(2+).

The catalysed reaction is N-succinyl-L-glutamate + H2O = L-glutamate + succinate. The protein operates within amino-acid degradation; L-arginine degradation via AST pathway; L-glutamate and succinate from L-arginine: step 5/5. Its function is as follows. Transforms N(2)-succinylglutamate into succinate and glutamate. This is Succinylglutamate desuccinylase from Serratia proteamaculans (strain 568).